The primary structure comprises 140 residues: Putative pre-16S rRNA nuclease (140 aa).

The protein belongs to the YqgF nuclease family.

The protein resides in the cytoplasm. Could be a nuclease involved in processing of the 5'-end of pre-16S rRNA. In Mannheimia succiniciproducens (strain KCTC 0769BP / MBEL55E), this protein is Putative pre-16S rRNA nuclease.